Consider the following 160-residue polypeptide: Transcriptional repressor NrdR (160 aa).

A zinc finger lies at Cys3 to Cys34. The ATP-cone domain occupies Pro49 to Asp139.

This sequence belongs to the NrdR family. It depends on Zn(2+) as a cofactor.

Negatively regulates transcription of bacterial ribonucleotide reductase nrd genes and operons by binding to NrdR-boxes. This Nitrosomonas eutropha (strain DSM 101675 / C91 / Nm57) protein is Transcriptional repressor NrdR.